The sequence spans 125 residues: Small ribosomal subunit protein uS13 (125 aa).

Residues 95–125 form a disordered region; sequence GLPVNGQRTRTNARTRKGGKKTVANKKKVTK. The segment covering 105 to 125 has biased composition (basic residues); sequence TNARTRKGGKKTVANKKKVTK.

Belongs to the universal ribosomal protein uS13 family. As to quaternary structure, part of the 30S ribosomal subunit. Forms a loose heterodimer with protein S19. Forms two bridges to the 50S subunit in the 70S ribosome.

Located at the top of the head of the 30S subunit, it contacts several helices of the 16S rRNA. In the 70S ribosome it contacts the 23S rRNA (bridge B1a) and protein L5 of the 50S subunit (bridge B1b), connecting the 2 subunits; these bridges are implicated in subunit movement. Contacts the tRNAs in the A and P-sites. The protein is Small ribosomal subunit protein uS13 of Leptospira interrogans serogroup Icterohaemorrhagiae serovar copenhageni (strain Fiocruz L1-130).